Consider the following 1233-residue polypeptide: MGFLKLIEIENFKSYKGRQIIGPFQRFTAIIGPNGSGKSNLMDAISFVLGEKTSNLRVKTLRDLIHGAPVGKPAANRAFVSMVYSEEGAEDRTFARVIVGGSSEYKINNKVVQLHEYSEELEKLGILIKARNFLVFQGAVESIAMKNPKERTALFEEISRSGELAQEYDKRKKEMVKAEEDTQFNYHRKKNIAAERKEAKQEKEEADRYQRLKDEVVRAQVQLQLFKLYHNEVEIEKLNKELASKNKEIEKDKKRMDKVEDELKEKKKELGKMMREQQQIEKEIKEKDSELNQKRPQYIKAKENTSHKIKKLEAAKKSLQNAQKHYKKRKGDMDELEKEMLSVEKARQEFEERMEEESQSQGRDLTLEENQVKKYHRLKEEASKRAATLAQELEKFNRDQKADQDRLDLEERKKVETEAKIKQKLREIEENQKRIEKLEEYITTSKQSLEEQKKLEGELTEEVEMAKRRIDEINKELNQVMEQLGDARIDRQESSRQQRKAEIMESIKRLYPGSVYGRLIDLCQPTQKKYQIAVTKVLGKNMDAIIVDSEKTGRDCIQYIKEQRGEPETFLPLDYLEVKPTDEKLRELKGAKLVIDVIRYEPPHIKKALQYACGNALVCDNVEDARRIAFGGHQRHKTVALDGTLFQKSGVISGGASDLKAKARRWDEKAVDKLKEKKERLTEELKEQMKAKRKEAELRQVQSQAHGLQMRLKYSQSDLEQTKTRHLALNLQEKSKLESELANFGPRINDIKRIIQSREREMKDLKEKMNQVEDEVFEEFCREIGVRNIREFEEEKVKRQNEIAKKRLEFENQKTRLGIQLDFEKNQLKEDQDKVHMWEQTVKKDENEIEKLKKEEQRHMKIIDETMAQLQDLKNQHLAKKSEVNDKNHEMEEIRKKLGGANKEMTHLQKEVTAIETKLEQKRSDRHNLLQACKMQDIKLPLSKGTMDDISQEEGSSQGEESVSGSQRTSSIYAREALIEIDYGDLCEDLKDAQAEEEIKQEMNTLQQKLNEQQSVLQRIAAPNMKAMEKLESVRDKFQETSDEFEAARKRAKKAKQAFEQIKKERFDRFNACFESVATNIDEIYKALSRNSSAQAFLGPENPEEPYLDGINYNCVAPGKRFRPMDNLSGGEKTVAALALLFAIHSYKPAPFFVLDEIDAALDNTNIGKVANYIKEQSTCNFQAIVISLKEEFYTKAESLIGVYPEQGDCVISKVLTFDLTKYPDANPNPNEQ.

Glycine 32–serine 39 lines the ATP pocket. 2 coiled-coil regions span residues glutamate 104–leucine 124 and glutamate 163–isoleucine 503. Basic and acidic residues predominate over residues isoleucine 284 to glutamine 293. Disordered stretches follow at residues isoleucine 284–lysine 308 and glutamine 348–glutamate 369. Serine 358 and serine 360 each carry phosphoserine. The SMC hinge domain occupies valine 515–alanine 629. 2 positions are modified to N6-acetyllysine: lysine 648 and lysine 713. Positions aspartate 667 to methionine 935 form a coiled coil. The segment at methionine 947 to threonine 969 is disordered. Residues glutamate 953–glutamine 967 are compositionally biased toward low complexity. Residues serine 957, serine 962, serine 966, and serine 970 each carry the phosphoserine modification. Residues glutamate 988–aspartate 1068 adopt a coiled-coil conformation. The residue at position 1037 (lysine 1037) is an N6-acetyllysine.

This sequence belongs to the SMC family. SMC1 subfamily. In terms of assembly, forms a heterodimer with SMC3 in cohesin complexes. Cohesin complexes are composed of the SMC1 (SMC1A or SMC1B) and SMC3 heterodimer attached via their SMC hinge domain, RAD21 which link them, and one STAG protein (STAG1, STAG2 or STAG3), which interacts with RAD21. In germ cell cohesin complexes, SMC1A is mutually exclusive with SMC1B. Interacts with STAG3. Found in a complex with CDCA5, SMC3 and RAD21, PDS5A/SCC-112 and PDS5B/APRIN. Found in a complex containing POLE and SMC3. Interacts with BRCA1, SYCP2, NDC80, RPGR and BRAT1. The cohesin complex interacts with the cohesin loading complex subunits NIPBL/Scc2 (via HEAT repeats) and MAU2/Scc4. NIPBL directly contacts all members of the complex, RAD21, SMC1A/B, SMC3 and STAG1. In terms of processing, phosphorylated upon ionizing radiation or DNA methylation. Phosphorylation of Ser-957 and Ser-966 activates it and is required for S-phase checkpoint activation. Post-translationally, ubiquitinated by the DCX(DCAF15) complex, leading to its degradation. In terms of tissue distribution, ubiquitous (at protein level).

The protein localises to the nucleus. It localises to the chromosome. It is found in the centromere. In terms of biological role, involved in chromosome cohesion during cell cycle and in DNA repair. Involved in DNA repair via its interaction with BRCA1 and its related phosphorylation by ATM, and works as a downstream effector in the ATM/NBS1 branch of S-phase checkpoint. Central component of cohesin complex. The cohesin complex is required for the cohesion of sister chromatids after DNA replication. The cohesin complex apparently forms a large proteinaceous ring within which sister chromatids can be trapped. At anaphase, the complex is cleaved and dissociates from chromatin, allowing sister chromatids to segregate. The cohesin complex may also play a role in spindle pole assembly during mitosis. Involved in DNA repair via its interaction with BRCA1 and its related phosphorylation by ATM, or via its phosphorylation by ATR. Works as a downstream effector both in the ATM/NBS1 branch and in the ATR/MSH2 branch of S-phase checkpoint. The protein is Structural maintenance of chromosomes protein 1A (Smc1a) of Mus musculus (Mouse).